Consider the following 465-residue polypeptide: ATP-dependent rRNA helicase rrp3 (465 aa).

The segment at 1–46 is disordered; it reads MSALKKRKITEKQPETNSDSEAESVSSRGSAKDETQTSGEEPAPAK. Residues 15-29 show a composition bias toward polar residues; it reads ETNSDSEAESVSSRG. Positions 46–74 match the Q motif motif; it reads KSFKELGIIDQLCEACENMGYKAPTPIQS. One can recognise a Helicase ATP-binding domain in the interval 77–248; sequence IPLALEGRDV…RASLSNPVRV (172 aa). Residue 90–97 participates in ATP binding; that stretch reads AETGSGKT. Positions 196-199 match the DEAD box motif; sequence DEAD. The 145-residue stretch at 275–419 folds into the Helicase C-terminal domain; it reads YLVYLLNEFA…EYQVEKDEVM (145 aa). The disordered stretch occupies residues 436 to 465; sequence MKSFDEKKGARGKKFGKGKRSRDDMDQEEG. A compositionally biased stretch (basic residues) spans 445–455; it reads ARGKKFGKGKR.

The protein belongs to the DEAD box helicase family. DDX47/RRP3 subfamily. Interacts with the SSU processome.

Its subcellular location is the nucleus. It carries out the reaction ATP + H2O = ADP + phosphate + H(+). Functionally, ATP-dependent rRNA helicase required for pre-ribosomal RNA processing. Involved in the maturation of the 35S-pre-rRNA and to its cleavage to mature 18S rRNA. The protein is ATP-dependent rRNA helicase rrp3 of Emericella nidulans (strain FGSC A4 / ATCC 38163 / CBS 112.46 / NRRL 194 / M139) (Aspergillus nidulans).